A 125-amino-acid polypeptide reads, in one-letter code: uncharacterized protein (125 aa).

Belongs to the asfivirus B125R family.

This is an uncharacterized protein from African swine fever virus (isolate Tick/Malawi/Lil 20-1/1983) (ASFV).